Here is a 74-residue protein sequence, read N- to C-terminus: Agnoprotein (74 aa).

The Cytoplasmic portion of the chain corresponds to 1-35; that stretch reads MFCEPKNLVVLRQLSRQASVKVGKTWTGTKKRAQR. S15 and S19 each carry phosphoserine; by host. T29 is subject to Phosphothreonine; by host. A helical; Signal-anchor for type II membrane protein membrane pass occupies residues 36-52; that stretch reads IFIFILELLLEFCRGED. Residues 53 to 74 are Extracellular-facing; the sequence is SVDGKNKSTTALPAVKDSVKDS.

It belongs to the polyomavirus agnoprotein family. Homooligomer. Interacts with VP1. Interacts with large T antigen; this interaction may impact upon the activity of T-antigen on the control of viral gene transcription and replication. Interacts with small t antigen. Interacts with host CBX5; this interaction induces the dissociation of CBX5 from LBR, resulting in destabilization of the nuclear envelope. Post-translationally, phosphorylated by host kinase. Phosphorylation segregates agnoprotein in cytoplasm, whereas unphosphorylated agnoprotein migrate to the nucleus.

It is found in the host cytoplasm. Its subcellular location is the host nucleus membrane. The protein localises to the host rough endoplasmic reticulum membrane. It localises to the host cell membrane. In terms of biological role, alters the structure of the nuclear envelope by interacting with host CBX5 and disrupting CBX5 association with LBR. Involved in the perinuclear-nuclear localization of the capsid protein VP1 during virion assembly and maturation. Plays an important role in the release of progeny virions from infected cells and in viral propagation, probably by acting as a viral ionic channel in the host plasma membrane. Allows influx of extracellular calcium ions in the host cell. May contribute to viral genome transcription and translation of viral late proteins. The protein is Agnoprotein of Homo sapiens (Human).